The following is a 306-amino-acid chain: Ribonuclease H2 subunit B (306 aa).

The interval 232–285 (LPDLSSPTPEPPVKKRKVSEAPVEAEEDYTKFNSDSKNKKSNSKMTAAQKSLAK) is disordered. Residues 259–269 (DYTKFNSDSKN) show a composition bias toward basic and acidic residues.

This sequence belongs to the RNase H2 subunit B family. The RNase H2 complex is a heterotrimer composed of the catalytic subunit rnaseh2a and the non-catalytic subunits rnaseh2b and rnaseh2c.

It is found in the nucleus. Its function is as follows. Non catalytic subunit of RNase H2, an endonuclease that specifically degrades the RNA of RNA:DNA hybrids. Participates in DNA replication, possibly by mediating the removal of lagging-strand Okazaki fragment RNA primers during DNA replication. Mediates the excision of single ribonucleotides from DNA:RNA duplexes. The polypeptide is Ribonuclease H2 subunit B (rnaseh2b) (Xenopus tropicalis (Western clawed frog)).